Here is a 261-residue protein sequence, read N- to C-terminus: Taurine import ATP-binding protein TauB (261 aa).

The region spanning 4 to 233 is the ABC transporter domain; that stretch reads LTADRVSVRY…RWRAGDSARA (230 aa). ATP is bound at residue 38–45; it reads GPSGCGKT.

This sequence belongs to the ABC transporter superfamily. Taurine importer (TC 3.A.1.17.1) family. In terms of assembly, the complex is composed of two ATP-binding proteins (TauB), two transmembrane proteins (TauC) and a solute-binding protein (TauA).

Its subcellular location is the cell inner membrane. The catalysed reaction is taurine(out) + ATP + H2O = taurine(in) + ADP + phosphate + H(+). Part of the ABC transporter complex TauABC involved in taurine import. Responsible for energy coupling to the transport system. The chain is Taurine import ATP-binding protein TauB from Chromobacterium violaceum (strain ATCC 12472 / DSM 30191 / JCM 1249 / CCUG 213 / NBRC 12614 / NCIMB 9131 / NCTC 9757 / MK).